We begin with the raw amino-acid sequence, 207 residues long: SPRY domain-containing protein 4 (207 aa).

The region spanning 12 to 207 is the B30.2/SPRY domain; sequence YRWGTKRWGV…HSGLEVPKGL (196 aa). N6-acetyllysine occurs at positions 53 and 130. Lysine 139 carries the N6-succinyllysine modification.

The protein is SPRY domain-containing protein 4 (Spryd4) of Rattus norvegicus (Rat).